Consider the following 378-residue polypeptide: Probable methyltransferase At1g29790 (378 aa).

Residues 1 to 6 (MAGFTM) lie on the Cytoplasmic side of the membrane. The chain crosses the membrane as a helical; Signal-anchor for type II membrane protein span at residues 7–29 (SLNLLLLVAMVATNILSLYHLSS). Residues 30 to 378 (TTNFFQSTVK…TALLQKPVAR (349 aa)) are Lumenal-facing. The tract at residues 67–87 (TTHQPDKSTSTSTSRAAVSSS) is disordered. The segment covering 74–87 (STSTSTSRAAVSSS) has biased composition (low complexity). Residue Asn247 is glycosylated (N-linked (GlcNAc...) asparagine).

This sequence belongs to the methyltransferase superfamily.

Its subcellular location is the golgi apparatus membrane. The polypeptide is Probable methyltransferase At1g29790 (Arabidopsis thaliana (Mouse-ear cress)).